We begin with the raw amino-acid sequence, 288 residues long: MEIKLEQLGYCYQKNSPFEKRALLDVNVSFDSGSYSAIIGHTGSGKSTLLQHLNALLMPTEGKITVGDREIVAGVKQKKLRDLRKKVGIVFQFPEAQLFEETVEKDICFGPMNFGVSEEDAKLRAKKVIYEVGLTEEILSRSPFELSGGQMRRVAIAGVLAMDPEVLVLDEPTAGLDPHGREEIMEMFYNLHKEKGLTTVLVTHSMEDAARYAEKIVLMKAGTVLQIGTPREVFAKPDELVDLGLSVPDVVRFQGLFERKFDVKLTKTCLTIDELTTEMAPYLAKGGA.

The 244-residue stretch at 3-246 folds into the ABC transporter domain; that stretch reads IKLEQLGYCY…PDELVDLGLS (244 aa). 40-47 is a binding site for ATP; that stretch reads GHTGSGKS.

It belongs to the ABC transporter superfamily. Energy-coupling factor EcfA family. Forms a stable energy-coupling factor (ECF) transporter complex composed of 2 membrane-embedded substrate-binding proteins (S component), 2 ATP-binding proteins (A component) and 2 transmembrane proteins (T component).

Its subcellular location is the cell membrane. ATP-binding (A) component of a common energy-coupling factor (ECF) ABC-transporter complex. Unlike classic ABC transporters this ECF transporter provides the energy necessary to transport a number of different substrates. The protein is Energy-coupling factor transporter ATP-binding protein EcfA2 of Listeria monocytogenes serotype 4b (strain F2365).